A 284-amino-acid polypeptide reads, in one-letter code: MLSQIAICIWVESTAILQDCQRALSADRYQLQVCESGEMLLEYAQTHRDQIDCLILVAANPSFRAVVQQLCFEGVVVPAIVVGDRDSEDPDEPAKEQLYHSAELHLGIHQLEQLPYQVDAALAEFLRLAPVETMADHIMLMGANHDPELSSQQRDLAQRLQERLGYLGVYYKRDPDRFLRNLPAYESQKLHQAMQTSYREIVLSYFSPNSNLNQSIDNFVNMAFFADVPVTKVVEIHMELMDEFAKKLRVEGRSEDILLDYRLTLIDVIAHLCEMYRRSIPRET.

The interval 1 to 135 (MLSQIAICIW…LRLAPVETMA (135 aa)) is psR domain, binds oxidized quinones. In terms of domain architecture, KaiA N-terminal spans 1 to 164 (MLSQIAICIW…DLAQRLQERL (164 aa)). The tract at residues 165-173 (GYLGVYYKR) is flexible linker. The KaiA C-terminal domain maps to 174-282 (DPDRFLRNLP…CEMYRRSIPR (109 aa)).

The protein belongs to the KaiA family. In terms of assembly, homodimer. The KaiABC complex composition changes during the circadian cycle to control KaiC phosphorylation. Complexes KaiC(6), KaiA(2-4):KaiC(6), KaiB(6):KaiC(6) and KaiC(6):KaiB(6):KaiA(12) are among the most important forms, many form cooperatively. The KaiA:KaiB complex is only found at 20-24 hours in the circadian cycle (subjective night). Binds to the C-terminal A-loop of KaiC via a coiled-coil structure. KaiA and CikA compete for binding to KaiB(fs). CikA copurifies with this protein in the clock complex. Interacts with LdpA.

Binding of oxidized quinones (produced as darkness falls) prevents KaiA from stimulating KaiC autophosphorylation. Functionally, key component of the KaiABC oscillator complex, which constitutes the main circadian regulator in cyanobacteria. Complex composition changes during the circadian cycle to control KaiC phosphorylation. KaiA stimulates KaiC autophosphorylation, while KaiB sequesters KaiA, leading to KaiC autodephosphorylation. KaiA binding to the KaiC CII domain during the subjective day yields KaiA(2-4):KaiC(6) complexes which stimulate KaiC autophosphorylation. A KaiA dimer is sufficient to enhance KaiC hexamer phosphorylation. Phospho-Ser-431 KaiC accumulation triggers binding of KaiB during the subjective night to form the KaiB(6):KaiC(6) complex, leading to changes in the output regulators CikA and SasA. KaiB(6):KaiC(6) formation exposes a site for KaiA binding on KaiB that sequesters KaiA from KaiC's CII domain, making the KaiC(6):KaiB(6):KaiA(12) complex resulting in KaiC autodephosphorylation. Complete dephosphorylation of KaiC leads to dissociation of KaiA(2):KaiB(1), completing 1 cycle of the Kai oscillator. In terms of biological role, circadian oscillations can be generated in vitro by incubating KaiA, KaiB and KaiC with 1 mM ATP. The cycle is self-sustainable for at least 3 cycles and resistant to temperature changes. A very robust clock is reconstituted with KaiA, KaiB, KaiC, SasA, CikA and RpaA; output is measured by transcription from an appropriate reporter. Its function is as follows. KaiA binds oxidized quinones via its N-terminal PsR domain and is able to sense redox signals directly; quinone analog DBMIB (2,5-dibromo-3-methyl-6-isopropyl-p-benzoquinone) blocks KaiA stimulation of KaiC phosphorylation. The homodimer binds up to 8 quinones in the crystal structure, 3 in the PsR domain and 1 via the C-terminal helical bundle. Binding of oxidized quinone to the KaiA C-terminal domain reduces the phosphorylation of KaiC slightly; quinones may interact in a complex manner with KaiA to mediate clock input. In Synechococcus elongatus (strain ATCC 33912 / PCC 7942 / FACHB-805) (Anacystis nidulans R2), this protein is Circadian clock oscillator protein KaiA.